Reading from the N-terminus, the 606-residue chain is DNA primase (606 aa).

The CHC2-type zinc finger occupies 40–64 (CPFHQEKTPSFYVVPEKRFYFCHGC). The Toprim domain occupies 256-349 (KAAVLVEGYF…DPDTFARREG (94 aa)). Residues glutamate 262, aspartate 307, and aspartate 309 each contribute to the Mg(2+) site. Residues 429–451 (VPLPKPAGGDAPPSSPNRPAPPL) form a disordered region. The segment covering 441–451 (PSSPNRPAPPL) has biased composition (pro residues).

The protein belongs to the DnaG primase family. Monomer. Interacts with DnaB. It depends on Zn(2+) as a cofactor. The cofactor is Mg(2+).

The catalysed reaction is ssDNA + n NTP = ssDNA/pppN(pN)n-1 hybrid + (n-1) diphosphate.. RNA polymerase that catalyzes the synthesis of short RNA molecules used as primers for DNA polymerase during DNA replication. This chain is DNA primase, found in Myxococcus xanthus.